The sequence spans 523 residues: Probable malate:quinone oxidoreductase 1 (523 aa).

The protein belongs to the MQO family. FAD serves as cofactor.

The enzyme catalyses (S)-malate + a quinone = a quinol + oxaloacetate. The protein operates within carbohydrate metabolism; tricarboxylic acid cycle; oxaloacetate from (S)-malate (quinone route): step 1/1. In Pseudomonas aeruginosa (strain ATCC 15692 / DSM 22644 / CIP 104116 / JCM 14847 / LMG 12228 / 1C / PRS 101 / PAO1), this protein is Probable malate:quinone oxidoreductase 1.